The chain runs to 95 residues: Large ribosomal subunit protein bL27 (95 aa).

A propeptide spanning residues 1-6 (MKLQLF) is cleaved from the precursor. The disordered stretch occupies residues 1–25 (MKLQLFAHKKGVGSSRNGRDSESKR).

This sequence belongs to the bacterial ribosomal protein bL27 family. The N-terminus is cleaved by ribosomal processing cysteine protease Prp.

This chain is Large ribosomal subunit protein bL27, found in Thermoanaerobacter pseudethanolicus (strain ATCC 33223 / 39E) (Clostridium thermohydrosulfuricum).